We begin with the raw amino-acid sequence, 677 residues long: Galactocerebrosidase (677 aa).

A signal peptide spans 1–33; the sequence is MGTVPAGSRRAPGCGEGMFILCLALLLAPGAPA. Positions 101, 143, and 189 each coordinate substrate. The active-site Proton donor/acceptor is the Glu-190. Glu-265 (nucleophile) is an active-site residue. Cys-278 and Cys-385 are disulfide-bonded. Residues Asn-291, Asn-370, and Asn-381 are each glycosylated (N-linked (GlcNAc...) asparagine). Arg-387 contacts substrate. Residues Asn-394, Asn-399, Asn-424, Asn-441, Asn-509, Asn-549, and Asn-630 are each glycosylated (N-linked (GlcNAc...) asparagine).

It belongs to the glycosyl hydrolase 59 family.

The protein resides in the lysosome. It carries out the reaction a beta-D-galactosyl-(1&lt;-&gt;1')-N-acylsphing-4-enine + H2O = an N-acylsphing-4-enine + D-galactose. The enzyme catalyses beta-D-galactosyl-(1&lt;-&gt;1)-sphing-4-enine + H2O = sphing-4-enine + D-galactose. The catalysed reaction is a D-galactosylceramide + H2O = an N-acyl-sphingoid base + D-galactose. Hydrolyzes the galactose ester bonds of glycolipids such as galactosylceramide and galactosylsphingosine. In Xenopus laevis (African clawed frog), this protein is Galactocerebrosidase.